We begin with the raw amino-acid sequence, 119 residues long: uncharacterized protein (119 aa).

The next 4 membrane-spanning stretches (helical) occupy residues Trp-3–Ser-23, Leu-29–Thr-49, Ala-58–Phe-78, and Val-87–Ala-107.

Belongs to the drug/metabolite transporter (DMT) superfamily. Small multidrug resistance (SMR) (TC 2.A.7.1) family.

It localises to the cell membrane. This is an uncharacterized protein from Bacillus subtilis (strain 168).